A 341-amino-acid polypeptide reads, in one-letter code: L-threonine 3-dehydrogenase (341 aa).

C38 contacts Zn(2+). Catalysis depends on charge relay system residues T40 and H43. Residues H63, E64, C93, C96, C99, and C107 each coordinate Zn(2+). NAD(+) contacts are provided by residues I175, D195, R200, 262–264, and 286–287; these read LGI and IY.

Belongs to the zinc-containing alcohol dehydrogenase family. Homotetramer. Zn(2+) is required as a cofactor.

The protein localises to the cytoplasm. The catalysed reaction is L-threonine + NAD(+) = (2S)-2-amino-3-oxobutanoate + NADH + H(+). It functions in the pathway amino-acid degradation; L-threonine degradation via oxydo-reductase pathway; glycine from L-threonine: step 1/2. In terms of biological role, catalyzes the NAD(+)-dependent oxidation of L-threonine to 2-amino-3-ketobutyrate. In Shewanella sp. (strain ANA-3), this protein is L-threonine 3-dehydrogenase.